Reading from the N-terminus, the 239-residue chain is Mitochondrial fission factor homolog B (239 aa).

The Cytoplasmic portion of the chain corresponds to 1 to 219; the sequence is MAEINRMQYE…ENKERVKHEM (219 aa). The interval 107 to 139 is disordered; the sequence is EGPAPATPHSKEVRSSGHLKRDGLASENSLRQN. Positions 115–130 are enriched in basic and acidic residues; the sequence is HSKEVRSSGHLKRDGL. The stretch at 184–214 forms a coiled coil; the sequence is DLALADAASLRRQIIKLNRRLLLLEEENKER. Residues 220-237 traverse the membrane as a helical; Anchor for type IV membrane protein segment; it reads TMYSIIIIFGLLNSWLWF. The Extracellular segment spans residues 238–239; it reads RR.

This sequence belongs to the Tango11 family.

It localises to the mitochondrion outer membrane. It is found in the peroxisome. Its function is as follows. Plays a role in mitochondrial and peroxisomal fission. Promotes the recruitment and association of the fission mediator dynamin-related protein 1 (DNM1L) to the mitochondrial surface. The polypeptide is Mitochondrial fission factor homolog B (mff-b) (Xenopus laevis (African clawed frog)).